We begin with the raw amino-acid sequence, 34 residues long: Photosystem II reaction center protein M (34 aa).

A helical transmembrane segment spans residues 5–25; it reads ILGLTATALFIIIPTSFLLIL.

The protein belongs to the PsbM family. As to quaternary structure, PSII is composed of 1 copy each of membrane proteins PsbA, PsbB, PsbC, PsbD, PsbE, PsbF, PsbH, PsbI, PsbJ, PsbK, PsbL, PsbM, PsbT, PsbX, PsbY, PsbZ, Psb30/Ycf12, at least 3 peripheral proteins of the oxygen-evolving complex and a large number of cofactors. It forms dimeric complexes.

The protein resides in the plastid. It localises to the chloroplast thylakoid membrane. In terms of biological role, one of the components of the core complex of photosystem II (PSII). PSII is a light-driven water:plastoquinone oxidoreductase that uses light energy to abstract electrons from H(2)O, generating O(2) and a proton gradient subsequently used for ATP formation. It consists of a core antenna complex that captures photons, and an electron transfer chain that converts photonic excitation into a charge separation. This subunit is found at the monomer-monomer interface. The polypeptide is Photosystem II reaction center protein M (Stigeoclonium helveticum (Green alga)).